The primary structure comprises 146 residues: Large ribosomal subunit protein uL15 (146 aa).

The segment covering 1-13 (MKLHELKPAEGSR) has biased composition (basic and acidic residues). Positions 1–48 (MKLHELKPAEGSRKVRNRVGRGIGSGNGKTAGKGHKGQNARSGGGVRL) are disordered. A compositionally biased stretch (gly residues) spans 21–31 (RGIGSGNGKTA).

It belongs to the universal ribosomal protein uL15 family. In terms of assembly, part of the 50S ribosomal subunit.

Functionally, binds to the 23S rRNA. The protein is Large ribosomal subunit protein uL15 of Bacillus cytotoxicus (strain DSM 22905 / CIP 110041 / 391-98 / NVH 391-98).